The primary structure comprises 21 residues: Cold shock protein CspSt (21 aa).

Residues 1-21 enclose the CSD domain; sequence KNGTVKWFNAEKGFGFITSED.

Its subcellular location is the cytoplasm. The sequence is that of Cold shock protein CspSt from Streptococcus thermophilus.